The sequence spans 532 residues: Zinc finger protein ZIC 2 (532 aa).

Residues 100 to 255 form a necessary for interaction with MDFIC and transcriptional activation or repression region; it reads PHAAHVGSYS…YMRQQCIKQE (156 aa). A phosphoserine mark is found at Ser191 and Ser199. A Glycyl lysine isopeptide (Lys-Gly) (interchain with G-Cter in SUMO2) cross-link involves residue Lys253. Residues 256–291 form a C2H2-type 1; atypical zinc finger; sequence LICKWIDPEQLSNPKKSCNKTFSTMHELVTHVSVEH. The C2H2-type 2; atypical zinc finger occupies 300–327; sequence HVCFWEECPREGKPFKAKYKLVNHIRVH. 3 C2H2-type zinc fingers span residues 333 to 357, 363 to 387, and 393 to 415; these read FPCPFPGCGKVFARSENLKIHKRTH, FQCEFEGCDRRFANSSDRKKHMHVH, and YLCKMCDKSYTHPSSLRKHMKVH. 2 disordered regions span residues 406–452 and 475–532; these read SSLR…SSSN and HRGG…EWYV. Positions 417–435 are enriched in low complexity; it reads SSPQGSESSPAASSGYESS. Residues 476–521 show a composition bias toward gly residues; it reads RGGGSGSGGAGGGSGGGSGSGGGGGGAGGGGGGSSGGGSGTAGGHS. The span at 523–532 shows a compositional bias: polar residues; the sequence is LSSNFNEWYV.

This sequence belongs to the GLI C2H2-type zinc-finger protein family. Interacts with RNF180. Interacts (via the C2H2-type domains 3, 4 and 5) with MDFIC (via the C2H2-type domains 3, 4 and 5); the interaction reduces its transcriptional activity. Interacts with GLI1 and GLI2. Interacts (via C2H2-type domain 3) with DHX9. In terms of processing, phosphorylated. Post-translationally, ubiquitinated by RNF180, leading to its degradation.

The protein localises to the nucleus. The protein resides in the cytoplasm. In terms of biological role, acts as a transcriptional activator or repressor. Plays important roles in the early stage of organogenesis of the CNS. Activates the transcription of the serotonin transporter SERT in uncrossed ipsilateral retinal ganglion cells (iRGCs) to refine eye-specific projections in primary visual targets. Its transcriptional activity is repressed by MDFIC. Involved in the formation of the ipsilateral retinal projection at the optic chiasm midline. Drives the expression of EPHB1 on ipsilaterally projecting growth cones. Binds to the minimal GLI-consensus sequence 5'-TGGGTGGTC-3'. Associates to the basal SERT promoter region from ventrotemporal retinal segments of retinal embryos. The chain is Zinc finger protein ZIC 2 (ZIC2) from Homo sapiens (Human).